Here is a 471-residue protein sequence, read N- to C-terminus: UDP-glycosyltransferase CGT (471 aa).

His-24 serves as the catalytic Proton acceptor. Position 24 (His-24) interacts with an anthocyanidin. Catalysis depends on Asp-120, which acts as the Charge relay. Thr-143 provides a ligand contact to UDP-alpha-D-glucose. Residues 280 to 281 (SR) are UDP. Val-343, Gln-345, His-360, Trp-363, Asn-364, Ser-365, and Glu-368 together coordinate UDP-alpha-D-glucose. Residue Gly-383 participates in an anthocyanidin binding. Residues Asp-384 and Gln-385 each coordinate UDP-alpha-D-glucose.

The protein belongs to the UDP-glycosyltransferase family.

The enzyme catalyses a 3'-hydro-2'-hydroxy-beta-oxodihydrochalcone + UDP-alpha-D-glucose = a 3'-(beta-D-glucopyranosyl)-2'-hydroxy-beta-oxodihydrochalcone + UDP + H(+). Functionally, UDP-glucose-dependent glucosyltransferase catalyzing the c-glucosylation of 2-hydroxyflavanones. Acts preferentially on the dibenzoylmethane tautomers formed in equilibrium with 2-hydroxyflavanones. No activity with naringenin or naringenin chalcone. The chain is UDP-glycosyltransferase CGT from Oryza sativa subsp. indica (Rice).